The primary structure comprises 708 residues: C-Jun-amino-terminal kinase-interacting protein 1 (708 aa).

The segment at Met1 to Ile26 is disordered. The segment covering Gly11 to Leu24 has biased composition (low complexity). Ser14, Ser28, and Ser39 each carry phosphoserine. The disordered stretch occupies residues Pro69 to Thr368. Low complexity predominate over residues Arg71–Leu87. Thr103 carries the post-translational modification Phosphothreonine; by MAPK8, MAPK9 and MAPK10. A compositionally biased stretch (acidic residues) spans Gly105–Leu116. A JNK-binding domain (JBD) region spans residues Ser126–Pro282. Ser149 carries the post-translational modification Phosphoserine. The segment at Arg154–Thr173 is minimal inhibitory domain (MID). Residues Thr159 to Leu179 show a composition bias toward polar residues. Phosphoserine is present on residues Ser178, Ser184, Ser190, Ser192, and Ser193. Polar residues predominate over residues Arg191 to Gln201. At Thr202 the chain carries Phosphothreonine; by MAPK8, MAPK9 and MAPK10. Ser211 is subject to Phosphoserine. Positions Pro220–Ser232 are enriched in polar residues. Basic and acidic residues predominate over residues Ile264–Ala274. An interaction with MAP3K7 region spans residues Leu280 to Ser468. The span at Pro292 to Ser308 shows a compositional bias: polar residues. Residues Ser308, Ser325, Ser327, Ser337, Ser352, Ser363, Ser366, Ser404, and Ser406 each carry the phosphoserine modification. Short sequence motifs (D-box) lie at residues Arg350–Pro357 and Arg361–Ser369. Thr408 carries the phosphothreonine modification. The tract at residues Glu426–Glu448 is disordered. Phosphoserine occurs at positions 441 and 444. Thr445 is subject to Phosphothreonine. Phosphoserine occurs at positions 466, 468, 469, and 470. The tract at residues Ser468–Ile657 is interaction with VRK2. Positions Glu485 to Lys546 constitute an SH3 domain. One can recognise a PID domain in the interval Ser558–Glu697.

The protein belongs to the JIP scaffold family. As to quaternary structure, forms homo- or heterooligomeric complexes. Binds specific components of the JNK signaling pathway namely MAPK8/JNK1, MAPK9/JNK2, MAPK10/JNK3, MAP2K7/MKK7, MAP3K11/MLK3 and DLK1. Also binds the proline-rich domain-containing splice variant of apolipoprotein E receptor 2 (ApoER2). Interacts, via the PID domain, with ARHGEF28. Binds the cytoplasmic tails of LRP1 and LRP2 (Megalin). Binds the TPR motif-containing C-terminal of kinesin light chain, KLC1. Pre-assembled MAPK8IP1 scaffolding complexes are then transported as a cargo of kinesin, to the required subcellular location. Interacts with the cytoplasmic domain of APP. Interacts with DCLK2, VRK2 and MAP3K7/TAK1. Found in a complex with SH3RF1, RAC1, MAP3K11/MLK3, MAP2K7/MKK7 and MAPK8/JNK1. Found in a complex with SH3RF1, RAC2, MAP3K7/TAK1, MAP2K7/MKK7, MAPK8/JNK1 and MAPK9/JNK2. Interacts with SH3RF2. Post-translationally, phosphorylated by MAPK8, MAPK9 and MAPK10. Phosphorylation on Thr-103 is also necessary for the dissociation and activation of MAP3K12. Phosphorylated by VRK2. Hyperphosphorylated during mitosis following activation of stress-activated and MAP kinases. Ubiquitinated. Two preliminary events are required to prime for ubiquitination; phosphorylation and an increased in intracellular calcium concentration. Then, the calcium influx initiates ubiquitination and degradation by the ubiquitin-proteasome pathway. In terms of tissue distribution, highly expressed in brain and pancreatic beta-cells. Weaker expression found in kidney.

The protein resides in the cytoplasm. It localises to the perinuclear region. The protein localises to the nucleus. It is found in the endoplasmic reticulum membrane. Its subcellular location is the mitochondrion membrane. Functionally, the JNK-interacting protein (JIP) group of scaffold proteins selectively mediates JNK signaling by aggregating specific components of the MAPK cascade to form a functional JNK signaling module. Required for JNK activation in response to excitotoxic stress. Cytoplasmic MAPK8IP1 causes inhibition of JNK-regulated activity by retaining JNK in the cytoplasm and thus inhibiting the JNK phosphorylation of c-Jun. May also participate in ApoER2-specific reelin signaling. Directly, or indirectly, regulates GLUT2 gene expression and beta-cell function. Appears to have a role in cell signaling in mature and developing nerve terminals. May function as a regulator of vesicle transport, through interactions with the JNK-signaling components and motor proteins. Functions as an anti-apoptotic protein and whose level seems to influence the beta-cell death or survival response. Acts as a scaffold protein that coordinates with SH3RF1 in organizing different components of the JNK pathway, including RAC1 or RAC2, MAP3K11/MLK3 or MAP3K7/TAK1, MAP2K7/MKK7, MAPK8/JNK1 and/or MAPK9/JNK2 into a functional multiprotein complex to ensure the effective activation of the JNK signaling pathway. Regulates the activation of MAPK8/JNK1 and differentiation of CD8(+) T-cells. The protein is C-Jun-amino-terminal kinase-interacting protein 1 (Mapk8ip1) of Rattus norvegicus (Rat).